Here is a 212-residue protein sequence, read N- to C-terminus: ATP-dependent Clp protease proteolytic subunit (212 aa).

S114 functions as the Nucleophile in the catalytic mechanism. Residue H139 is part of the active site.

It belongs to the peptidase S14 family. In terms of assembly, fourteen ClpP subunits assemble into 2 heptameric rings which stack back to back to give a disk-like structure with a central cavity, resembling the structure of eukaryotic proteasomes.

Its subcellular location is the cytoplasm. It catalyses the reaction Hydrolysis of proteins to small peptides in the presence of ATP and magnesium. alpha-casein is the usual test substrate. In the absence of ATP, only oligopeptides shorter than five residues are hydrolyzed (such as succinyl-Leu-Tyr-|-NHMec, and Leu-Tyr-Leu-|-Tyr-Trp, in which cleavage of the -Tyr-|-Leu- and -Tyr-|-Trp bonds also occurs).. Cleaves peptides in various proteins in a process that requires ATP hydrolysis. Has a chymotrypsin-like activity. Plays a major role in the degradation of misfolded proteins. The polypeptide is ATP-dependent Clp protease proteolytic subunit (Azoarcus sp. (strain BH72)).